The primary structure comprises 303 residues: Caspase-7 (303 aa).

The interval 1–27 is disordered; the sequence is MADDQNCAPELEKADPSGEDGVDAKPD. Alanine 2 carries the N-acetylalanine modification. Residues 2-23 constitute a propeptide, N-terminally processed; sequence ADDQNCAPELEKADPSGEDGVD. Residues 10–27 show a composition bias toward basic and acidic residues; the sequence is ELEKADPSGEDGVDAKPD. A Phosphoserine modification is found at serine 30. The tract at residues 38 to 41 is exosite; it reads KKKK. The tract at residues 76-87 is loop L1; it reads KNFDKVTGMDVR. Histidine 144 is a catalytic residue. Threonine 173 carries the post-translational modification Phosphothreonine. Cysteine 186 is a catalytic residue. Residues 187–196 form a loop L2 region; sequence RGTELDDGVQ. Residues 199–206 constitute a propeptide that is removed on maturation; the sequence is SGPINETD. Residues 226 to 238 form a loop L3 region; sequence VPGYYSWRNPGKG. The residue at position 239 (serine 239) is a Phosphoserine. Positions 274 to 288 are loop L4; the sequence is ESQCDDPCFNEKKQI.

Belongs to the peptidase C14A family. In terms of assembly, heterotetramer that consists of two anti-parallel arranged heterodimers, each one formed by a 20 kDa (p20) and a 11 kDa (p11) subunit. Interacts with XIAP (via its second BIR domain); inhibiting CASP7 activity. Interacts with BIRC6/bruce. Interacts with ATXN3 (short isoform 1). Interacts with HSPA5. Post-translationally, cleavage by different proteases, such as granzyme B (GZMB), caspase-1 (CASP1), caspase-8 (CASP8) or caspase-9 (CASP9) generate the two active subunits. Its involvement in different programmed cell death processes is probably specified by the protease that activates CASP7. Cleaved and activated by initiator caspases (CASP8 and/or CASP9), leading to execution phase of apoptosis. Cleavage and maturation by GZMB regulates granzyme-mediated programmed cell death. Cleaved and activated by CASP1 in response to bacterial infection. Propeptide domains can also be cleaved efficiently by CASP3. Active heterodimers between the small subunit of caspase-7 and the large subunit of CASP3, and vice versa, also occur. Also cleaved at the N-terminus at alternative sites by CAPN1, leading to its activation. In terms of processing, phosphorylation at Ser-30 and Ser-239 by PAK2 inhibits its activity. Phosphorylation at Ser-30 prevents cleavage and activation by initiator caspase CASP9, while phosphorylation at Ser-239 prevents thiol protease activity by preventing substrate-binding. Ubiquitinated by BIRC6; this activity is inhibited by DIABLO/SMAC.

The protein localises to the cytoplasm. The protein resides in the cytosol. Its subcellular location is the nucleus. It is found in the secreted. It localises to the extracellular space. The catalysed reaction is Strict requirement for an Asp residue at position P1 and has a preferred cleavage sequence of Asp-Glu-Val-Asp-|-.. With respect to regulation, during activation, the N-terminal disordered prodomain is removed by cleavage. Concomitantly, double cleavage gives rise to a large Caspase-7 subunit p20 and a small Caspase-7 subunit p11. The two large and two small subunits then assemble to form the active CASP7 complex. Can be cleaved and activated by different caspases, depending on the context. Cleaved and activated by initiator caspases (CASP8 and/or CASP9), leading to execution phase of apoptosis. Cleavage and maturation by GZMB regulates granzyme-mediated programmed cell death. Cleavage and maturation by CASP1 regulates pyroptosis. Inhibited by XIAP, which directly binds to the active site pocket and obstructs substrate entry. Phosphorylation at Ser-30 and Ser-239 by PAK2 inhibits its activity. Inhibited by BIRC6; following inhibition of BIRC6-caspase binding by DIABLO/SMAC, BIRC6 is subjected to caspase cleavage, leading to an increase in active caspases. Its function is as follows. Thiol protease involved in different programmed cell death processes, such as apoptosis, pyroptosis or granzyme-mediated programmed cell death, by proteolytically cleaving target proteins. Has a marked preference for Asp-Glu-Val-Asp (DEVD) consensus sequences, with some plasticity for alternate non-canonical sequences. Its involvement in the different programmed cell death processes is probably determined by upstream proteases that activate CASP7. Acts as an effector caspase involved in the execution phase of apoptosis: following cleavage and activation by initiator caspases (CASP8 and/or CASP9), mediates execution of apoptosis by catalyzing cleavage of proteins, such as CLSPN, PARP1, PTGES3 and YY1. Compared to CASP3, acts as a minor executioner caspase and cleaves a limited set of target proteins. Acts as a key regulator of the inflammatory response in response to bacterial infection by catalyzing cleavage and activation of the sphingomyelin phosphodiesterase SMPD1 in the extracellular milieu, thereby promoting membrane repair. Regulates pyroptosis in intestinal epithelial cells: cleaved and activated by CASP1 in response to S.typhimurium infection, promoting its secretion to the extracellular milieu, where it catalyzes activation of SMPD1, generating ceramides that repair membranes and counteract the action of gasdermin-D (GSDMD) pores. Regulates granzyme-mediated programmed cell death in hepatocytes: cleaved and activated by granzyme B (GZMB) in response to bacterial infection, promoting its secretion to the extracellular milieu, where it catalyzes activation of SMPD1, generating ceramides that repair membranes and counteract the action of perforin (PRF1) pores. Following cleavage by CASP1 in response to inflammasome activation, catalyzes processing and inactivation of PARP1, alleviating the transcription repressor activity of PARP1. Acts as an inhibitor of type I interferon production during virus-induced apoptosis by mediating cleavage of antiviral proteins CGAS, IRF3 and MAVS, thereby preventing cytokine overproduction. Cleaves and activates sterol regulatory element binding proteins (SREBPs). Cleaves phospholipid scramblase proteins XKR4, XKR8 and XKR9. Cleaves BIRC6 following inhibition of BIRC6-caspase binding by DIABLO/SMAC. The protein is Caspase-7 (CASP7) of Mesocricetus auratus (Golden hamster).